The following is a 244-amino-acid chain: 3-deoxy-manno-octulosonate cytidylyltransferase (244 aa).

The protein belongs to the KdsB family.

It localises to the cytoplasm. The catalysed reaction is 3-deoxy-alpha-D-manno-oct-2-ulosonate + CTP = CMP-3-deoxy-beta-D-manno-octulosonate + diphosphate. Its pathway is nucleotide-sugar biosynthesis; CMP-3-deoxy-D-manno-octulosonate biosynthesis; CMP-3-deoxy-D-manno-octulosonate from 3-deoxy-D-manno-octulosonate and CTP: step 1/1. The protein operates within bacterial outer membrane biogenesis; lipopolysaccharide biosynthesis. Activates KDO (a required 8-carbon sugar) for incorporation into bacterial lipopolysaccharide in Gram-negative bacteria. This Vesicomyosocius okutanii subsp. Calyptogena okutanii (strain HA) protein is 3-deoxy-manno-octulosonate cytidylyltransferase.